Reading from the N-terminus, the 802-residue chain is ATP-dependent zinc metalloprotease FTSH 7, chloroplastic (802 aa).

Residues 1–55 (MTTTFEFLQPRIHGFATCCSSNSLLYSKASRFFNDRCRVYRQNPNRFVSNSITLP) constitute a chloroplast transit peptide. Positions 87 to 117 (CQEDDQNESSSEEEESSQSTPAKSERKREKK) are disordered. Positions 88–102 (QEDDQNESSSEEEES) are enriched in acidic residues. The next 2 helical transmembrane spans lie at 134-154 (IIQAQGIGVLLLQLSVVMFVM) and 268-288 (GGFFNSALIALFYIAVLAGLI). Residue 365–372 (GLPGTGKT) coordinates ATP. Zn(2+) is bound at residue His-590. The active site involves Glu-591. Residues His-594 and Asp-673 each contribute to the Zn(2+) site.

The protein in the N-terminal section; belongs to the AAA ATPase family. It in the C-terminal section; belongs to the peptidase M41 family. It depends on Zn(2+) as a cofactor.

It localises to the plastid. The protein localises to the chloroplast thylakoid membrane. Probable ATP-dependent zinc metallopeptidase. The chain is ATP-dependent zinc metalloprotease FTSH 7, chloroplastic (FTSH7) from Arabidopsis thaliana (Mouse-ear cress).